Here is a 492-residue protein sequence, read N- to C-terminus: Aspartyl/glutamyl-tRNA(Asn/Gln) amidotransferase subunit B (492 aa).

It belongs to the GatB/GatE family. GatB subfamily. In terms of assembly, heterotrimer of A, B and C subunits.

The catalysed reaction is L-glutamyl-tRNA(Gln) + L-glutamine + ATP + H2O = L-glutaminyl-tRNA(Gln) + L-glutamate + ADP + phosphate + H(+). It carries out the reaction L-aspartyl-tRNA(Asn) + L-glutamine + ATP + H2O = L-asparaginyl-tRNA(Asn) + L-glutamate + ADP + phosphate + 2 H(+). Functionally, allows the formation of correctly charged Asn-tRNA(Asn) or Gln-tRNA(Gln) through the transamidation of misacylated Asp-tRNA(Asn) or Glu-tRNA(Gln) in organisms which lack either or both of asparaginyl-tRNA or glutaminyl-tRNA synthetases. The reaction takes place in the presence of glutamine and ATP through an activated phospho-Asp-tRNA(Asn) or phospho-Glu-tRNA(Gln). The sequence is that of Aspartyl/glutamyl-tRNA(Asn/Gln) amidotransferase subunit B from Pelagibacter ubique (strain HTCC1062).